Reading from the N-terminus, the 209-residue chain is MKKAIIGKKVGMTQIFDENGRVIPVTVVEAGPCVVVQKKTVETDGYDAIQVGFGELREKLVNKPRKGHFAKAGVSLRRTLKEFRMEDVANYNVGDEIKVDTFEIGDKVDVSGVSKGKGFQGTIKRWNASRGPMSHGSKFHRAPGSMGAASDPSRTFKNKRMPGHMGAKNTTVLNLEVVKIMPEKNIILIKGGIPGPNKGTVVIRNSVKA.

The disordered stretch occupies residues 129–153 (SRGPMSHGSKFHRAPGSMGAASDPS).

This sequence belongs to the universal ribosomal protein uL3 family. As to quaternary structure, part of the 50S ribosomal subunit. Forms a cluster with proteins L14 and L19.

Functionally, one of the primary rRNA binding proteins, it binds directly near the 3'-end of the 23S rRNA, where it nucleates assembly of the 50S subunit. This chain is Large ribosomal subunit protein uL3, found in Clostridium perfringens (strain 13 / Type A).